The following is a 269-amino-acid chain: Probable cysteine protease avirulence protein AvrPpiC2 (269 aa).

A disordered region spans residues 1–39 (MTIVSGHIGKHPSLTTVQAGSSASVENQMPDPAQFSDGR). Over residues 13-27 (SLTTVQAGSSASVEN) the composition is skewed to polar residues. Catalysis depends on residues Cys72, His213, and Asp230.

This sequence belongs to the peptidase C58 family.

In terms of biological role, potential cysteine protease. Avirulence protein, which may be essential during infection of plant cells from Pea and some Arabidopsis thaliana cultivars. May act by affecting the plant defense system. In plants lacking appropriate resistance (R) gene, it probably impairs the plant defense system and leads to the bacteria multiplication. In contrast, in plants containing the appropriate R protein, it is unable to induce disease symptoms, explaining its avirulence name. The protein is Probable cysteine protease avirulence protein AvrPpiC2 (avrPpiC2) of Pseudomonas syringae pv. pisi.